Reading from the N-terminus, the 120-residue chain is Large ribosomal subunit protein uL18 (120 aa).

This sequence belongs to the universal ribosomal protein uL18 family. As to quaternary structure, part of the 50S ribosomal subunit; part of the 5S rRNA/L5/L18/L25 subcomplex. Contacts the 5S and 23S rRNAs.

Functionally, this is one of the proteins that bind and probably mediate the attachment of the 5S RNA into the large ribosomal subunit, where it forms part of the central protuberance. The sequence is that of Large ribosomal subunit protein uL18 from Paramagnetospirillum magneticum (strain ATCC 700264 / AMB-1) (Magnetospirillum magneticum).